The following is a 529-amino-acid chain: hal-like protein DDB_G0273787/DDB_G0273081 (529 aa).

The segment at residues 151–153 (ASG) is a cross-link (5-imidazolinone (Ala-Gly)). 2,3-didehydroalanine (Ser) is present on Ser152.

Belongs to the PAL/histidase family. Contains an active site 4-methylidene-imidazol-5-one (MIO), which is formed autocatalytically by cyclization and dehydration of residues Ala-Ser-Gly.

The protein resides in the cytoplasm. It carries out the reaction L-histidine = trans-urocanate + NH4(+). It participates in amino-acid degradation; L-histidine degradation into L-glutamate; N-formimidoyl-L-glutamate from L-histidine: step 1/3. This Dictyostelium discoideum (Social amoeba) protein is hal-like protein DDB_G0273787/DDB_G0273081.